Reading from the N-terminus, the 431-residue chain is Histidinol dehydrogenase (431 aa).

Positions 131, 193, and 216 each coordinate NAD(+). Serine 239, glutamine 261, and histidine 264 together coordinate substrate. 2 residues coordinate Zn(2+): glutamine 261 and histidine 264. Catalysis depends on proton acceptor residues glutamate 329 and histidine 330. Substrate-binding residues include histidine 330, aspartate 363, glutamate 417, and histidine 422. Residue aspartate 363 coordinates Zn(2+). Zn(2+) is bound at residue histidine 422.

The protein belongs to the histidinol dehydrogenase family. Zn(2+) is required as a cofactor.

The catalysed reaction is L-histidinol + 2 NAD(+) + H2O = L-histidine + 2 NADH + 3 H(+). It participates in amino-acid biosynthesis; L-histidine biosynthesis; L-histidine from 5-phospho-alpha-D-ribose 1-diphosphate: step 9/9. In terms of biological role, catalyzes the sequential NAD-dependent oxidations of L-histidinol to L-histidinaldehyde and then to L-histidine. The polypeptide is Histidinol dehydrogenase (Clostridium acetobutylicum (strain ATCC 824 / DSM 792 / JCM 1419 / IAM 19013 / LMG 5710 / NBRC 13948 / NRRL B-527 / VKM B-1787 / 2291 / W)).